Consider the following 447-residue polypeptide: C4-dicarboxylate transport protein (447 aa).

Helical transmembrane passes span 21–41 (HLYVQVLIAMALSILLGYFAP), 57–77 (LVKMIIAPVIFLTVVTGIAGM), 92–112 (IYFLCFSTLALVVGLVVVNIV), 141–161 (SLIGFLLNIIPATPVSALASG), 163–183 (ILQVLFFSVLFGIALASVGEA), 201–221 (LVAILMRAAPLGAFGAMAYTV), 232–252 (LAMLVGTFYITAILFVLIVLG), 320–340 (IYMTIAALFIAQALNIPLSWG), 345–365 (LLAVAMLSSKGAAGVTGAGFV), and 368–388 (AATLSVIPSIPVAGIGLIFGV).

It belongs to the dicarboxylate/amino acid:cation symporter (DAACS) (TC 2.A.23) family.

The protein localises to the cell inner membrane. Responsible for the transport of dicarboxylates such as succinate, fumarate, and malate from the periplasm across the membrane. This Granulibacter bethesdensis (strain ATCC BAA-1260 / CGDNIH1) protein is C4-dicarboxylate transport protein.